Reading from the N-terminus, the 182-residue chain is CDP-diacylglycerol--glycerol-3-phosphate 3-phosphatidyltransferase (182 aa).

Over 1–12 (MRLNIPTCLTLF) the chain is Cytoplasmic. The helical transmembrane segment at 13-37 (RLIIVPFFIIVFYLPFSNASFYSAI) threads the bilayer. Residues 38–60 (IFILAALTDWFDGFLARKLNQTT) are Periplasmic-facing. The helical transmembrane segment at 61-81 (CFGAFLDPVADKIIVVIGLIL) threads the bilayer. Over 82-86 (IIEYF) the chain is Cytoplasmic. The chain crosses the membrane as a helical span at residues 87–107 (HSFWITIPSLIMIIREIIISS). The Periplasmic segment spans residues 108–145 (LREWMAEIGKNNLLSVSLISKLKTSIQMLAIFSLLWKE). A helical membrane pass occupies residues 146–168 (TYIIIIIGILSLYVSSILAFLSM). At 169 to 181 (LKYFYIAWRDLFR) the chain is on the cytoplasmic side.

This sequence belongs to the CDP-alcohol phosphatidyltransferase class-I family.

It is found in the cell inner membrane. It catalyses the reaction a CDP-1,2-diacyl-sn-glycerol + sn-glycerol 3-phosphate = a 1,2-diacyl-sn-glycero-3-phospho-(1'-sn-glycero-3'-phosphate) + CMP + H(+). It functions in the pathway phospholipid metabolism; phosphatidylglycerol biosynthesis; phosphatidylglycerol from CDP-diacylglycerol: step 1/2. In terms of biological role, catalyzes the conversion of cytidine diphosphate diacylglycerol (CDP-DG) and glycerol 3-phosphate into phosphatidylglycerol. Essential for the synthesis of anionic phospholipids, thereby playing a role in balancing the ratio of zwitterionic and anionic phospholipids, which is thought to be important for normal membrane function. This Wigglesworthia glossinidia brevipalpis protein is CDP-diacylglycerol--glycerol-3-phosphate 3-phosphatidyltransferase.